The primary structure comprises 832 residues: Protein wech (832 aa).

Over residues Met-1–Met-14 the composition is skewed to polar residues. The segment at Met-1 to Asn-42 is disordered. Low complexity predominate over residues Ala-15–Asn-32. Position 107 is a phosphoserine (Ser-107). B box-type zinc fingers lie at residues Asn-118–Leu-163 and Ser-184–Ile-224. Positions 123, 126, 145, 149, 189, 192, 211, and 216 each coordinate Zn(2+). 3 positions are modified to phosphoserine: Ser-470, Ser-475, and Ser-506. NHL repeat units follow at residues Ser-537 to Asp-580, Lys-584 to Ser-627, Leu-631 to Glu-674, Gln-680 to Asp-722, and Leu-727 to Asn-770.

As to quaternary structure, interacts with the head domain of rhea and the kinase domain of Ilk. Interacts with AGO1. Interacts with mei-P26. Expressed in ovarian germline stem cells (at protein level). Expressed ubiquitously in all epithelial cells during early stages of embryogenesis. Specifically expressed at epidermal muscle attachment site.

In terms of biological role, vital for larval development. Plays a role in tumor formation. A crucial component for the physical link between integrins and the cytoskeleton in the epidermal muscle attachment sites. This chain is Protein wech (wech), found in Drosophila melanogaster (Fruit fly).